Reading from the N-terminus, the 252-residue chain is Chitooligosaccharide deacetylase (252 aa).

Residues His-61 and His-125 each contribute to the Mg(2+) site.

It belongs to the YdjC deacetylase family. ChbG subfamily. Homodimer. Mg(2+) serves as cofactor.

It is found in the cytoplasm. It catalyses the reaction N,N'-diacetylchitobiose + H2O = N-acetyl-beta-D-glucosaminyl-(1-&gt;4)-D-glucosamine + acetate. It carries out the reaction diacetylchitobiose-6'-phosphate + H2O = N'-monoacetylchitobiose-6'-phosphate + acetate. Its pathway is glycan degradation; chitin degradation. Its function is as follows. Involved in the degradation of chitin. ChbG is essential for growth on the acetylated chitooligosaccharides chitobiose and chitotriose but is dispensable for growth on cellobiose and chitosan dimer, the deacetylated form of chitobiose. Deacetylation of chitobiose-6-P and chitotriose-6-P is necessary for both the activation of the chb promoter by the regulatory protein ChbR and the hydrolysis of phosphorylated beta-glucosides by the phospho-beta-glucosidase ChbF. Catalyzes the removal of only one acetyl group from chitobiose-6-P to yield monoacetylchitobiose-6-P, the inducer of ChbR and the substrate of ChbF. In Salmonella newport (strain SL254), this protein is Chitooligosaccharide deacetylase.